A 75-amino-acid chain; its full sequence is CLAVATA3/ESR (CLE)-related protein 2 (75 aa).

Positions 1-22 are cleaved as a signal peptide; that stretch reads MAKLSFTFCFLLFLLLSSIAAG. A disordered region spans residues 40-75; that stretch reads PSIEATSPTVEDDQAAGSHGKSPERLSPGGPDPQHH. Residues proline 67 and proline 70 each carry the hydroxyproline modification. O-linked (Ara...) hydroxyproline glycosylation is present at proline 70.

This sequence belongs to the CLV3/ESR signal peptide family. As to quaternary structure, interacts with the extracellular leucine-rich repeat region of CLV1. In terms of processing, the O-glycosylation (arabinosylation) of the hydroxyproline Pro-70 enhances binding affinity of the CLE2p peptide for its receptor. Mostly expressed in roots and seedlings, and, to a lower extent, in apex.

The protein resides in the secreted. Its subcellular location is the extracellular space. Its function is as follows. Extracellular signal peptide that regulates cell fate. May act with CLV1 as a ligand-receptor pair in a signal transduction pathway, coordinating growth between adjacent meristematic regions. The chain is CLAVATA3/ESR (CLE)-related protein 2 from Arabidopsis thaliana (Mouse-ear cress).